We begin with the raw amino-acid sequence, 327 residues long: D-threonate 4-phosphate dehydrogenase (327 aa).

Residues His-139 and Thr-140 each contribute to the substrate site. 3 residues coordinate a divalent metal cation: His-169, His-213, and His-268. Substrate is bound by residues Lys-276, Asn-285, and Arg-294.

This sequence belongs to the PdxA family. PdxA2 subfamily. In terms of assembly, homodimer. The cofactor is a divalent metal cation.

The enzyme catalyses 4-O-phospho-D-threonate + NAD(+) = dihydroxyacetone phosphate + CO2 + NADH. Functionally, catalyzes the NAD-dependent oxidation and subsequent decarboxylation of D-threonate 4-phosphate to produce dihydroxyacetone phosphate (DHAP). Can also use 4-hydroxy-L-threonine 4-phosphate as substrate. This chain is D-threonate 4-phosphate dehydrogenase, found in Salmonella typhimurium (strain LT2 / SGSC1412 / ATCC 700720).